A 387-amino-acid chain; its full sequence is Succinate--CoA ligase [ADP-forming] subunit beta (387 aa).

The region spanning 9-236 (RDLFEKYGVP…KAAADPLEAK (228 aa)) is the ATP-grasp domain. ATP-binding positions include Lys-45, 52 to 54 (GRG), Ala-94, and Glu-99. Residues Asn-191 and Asp-205 each contribute to the Mg(2+) site. Residues Asn-256 and 318 to 320 (GIT) contribute to the substrate site.

The protein belongs to the succinate/malate CoA ligase beta subunit family. Heterotetramer of two alpha and two beta subunits. It depends on Mg(2+) as a cofactor.

The enzyme catalyses succinate + ATP + CoA = succinyl-CoA + ADP + phosphate. It carries out the reaction GTP + succinate + CoA = succinyl-CoA + GDP + phosphate. It functions in the pathway carbohydrate metabolism; tricarboxylic acid cycle; succinate from succinyl-CoA (ligase route): step 1/1. Its function is as follows. Succinyl-CoA synthetase functions in the citric acid cycle (TCA), coupling the hydrolysis of succinyl-CoA to the synthesis of either ATP or GTP and thus represents the only step of substrate-level phosphorylation in the TCA. The beta subunit provides nucleotide specificity of the enzyme and binds the substrate succinate, while the binding sites for coenzyme A and phosphate are found in the alpha subunit. The chain is Succinate--CoA ligase [ADP-forming] subunit beta from Leifsonia xyli subsp. xyli (strain CTCB07).